The chain runs to 359 residues: Ribosomal RNA large subunit methyltransferase M (359 aa).

S-adenosyl-L-methionine is bound by residues Ser-186, 219–222 (CPGG), Asp-238, Asp-258, and Asp-275. Residue Lys-304 is the Proton acceptor of the active site.

It belongs to the class I-like SAM-binding methyltransferase superfamily. RNA methyltransferase RlmE family. RlmM subfamily. Monomer.

The protein localises to the cytoplasm. The catalysed reaction is cytidine(2498) in 23S rRNA + S-adenosyl-L-methionine = 2'-O-methylcytidine(2498) in 23S rRNA + S-adenosyl-L-homocysteine + H(+). Catalyzes the 2'-O-methylation at nucleotide C2498 in 23S rRNA. This Vibrio vulnificus (strain YJ016) protein is Ribosomal RNA large subunit methyltransferase M.